Consider the following 724-residue polypeptide: Cyclin-T1 (724 aa).

Residue serine 117 is modified to Phosphoserine. Positions 253-270 (KRIRNWRAYQAAMKTKPD) match the Nuclear localization signal motif. A Glycyl lysine isopeptide (Lys-Gly) (interchain with G-Cter in SUMO2) cross-link involves residue lysine 342. Residues 384 to 425 (SAKVSLKEYRAKHAEELAAQKRQLENMEANVKSQYAYAAQNL) are a coiled coil. Position 388 is a phosphoserine (serine 388). At lysine 390 the chain carries N6-acetyllysine. Lysine 415 is covalently cross-linked (Glycyl lysine isopeptide (Lys-Gly) (interchain with G-Cter in SUMO2)). Residues serine 416, serine 473, and serine 474 each carry the ADP-ribosylserine modification. The histidine-rich domain (HRD) stretch occupies residues 479-549 (IKMRIKVHSA…RPSDPKHSSQ (71 aa)). Residue lysine 480 forms a Glycyl lysine isopeptide (Lys-Gly) (interchain with G-Cter in SUMO2) linkage. The segment covering 483–507 (IKVHSAGDKHNSIEDSVTKSREHKE) has biased composition (basic and acidic residues). Disordered regions lie at residues 483-586 (IKVH…VFDH) and 691-724 (PRAGAISSRSGTTDKPRPPPLPSEPPPPLPPLPK). Lysine 484 is modified (N6-(ADP-ribosyl)lysine). Histidine 486 is subject to ADP-ribosylhistidine. Residues serine 494 and serine 498 each carry the phosphoserine modification. Residues 508–529 (KQRTHPSNHHHHHNHHSHRHSH) are compositionally biased toward basic residues. An ADP-ribosylhistidine modification is found at histidine 529. An ADP-ribosylserine mark is found at serine 548 and serine 551. An ADP-ribosylhistidine modification is found at histidine 555. Residues 559–569 (SLSSTLSSSSS) show a composition bias toward low complexity. An ADP-ribosylserine modification is found at serine 562. Residues 708-724 (PPPLPSEPPPPLPPLPK) show a composition bias toward pro residues.

Belongs to the cyclin family. Cyclin C subfamily. Cyclin-T1 is the predominant cyclin that associates with CDK9 to form a heterodimer called P-TEFb. P-TEFb forms a complex with AFF4/AF5Q31. Component of a complex which is at least composed of HTATSF1/Tat-SF1, P-TEFb complex, RNA pol II, SUPT5H, and NCL/nucleolin. Component of the 7SK snRNP complex at least composed of P-TEFb (composed of CDK9 and CCNT1/cyclin-T1), HEXIM1, HEXIM2, BCDIN3, SART3 proteins and 7SK and U6 snRNAs. Interacts (via central region) with ZMYND8 (via N-terminus); the interaction is direct and the association appears to occur between homodimeric ZMYND8 and the activated form of the P-TEFb complex. Interacts with BRD4, targets chromatin binding. Interacts with JMJD6. Interacts with MDFIC. Interacts with HSF1. Interacts with HTATSF1. Interacts with TBX21. ADP-ribosylation on serine residues by PARP1 in response to DNA damage disrupts the phase separation activity of CCNT1, thereby preventing activation of CDK9.

It localises to the nucleus. Functionally, regulatory subunit of the cyclin-dependent kinase pair (CDK9/cyclin-T1) complex, also called positive transcription elongation factor B (P-TEFb), which facilitates the transition from abortive to productive elongation by phosphorylating the CTD (C-terminal domain) of the large subunit of RNA polymerase II (RNA Pol II). Required to activate the protein kinase activity of CDK9: acts by mediating formation of liquid-liquid phase separation (LLPS) that enhances binding of P-TEFb to the CTD of RNA Pol II. This Mus musculus (Mouse) protein is Cyclin-T1 (Ccnt1).